The primary structure comprises 1030 residues: Semaphorin-6A (1030 aa).

The N-terminal stretch at 1 to 18 (MRSEALLLYFTLLHFAGA) is a signal peptide. Residues 19 to 649 (GFPEDSEPIS…KGHDQLVPVT (631 aa)) lie on the Extracellular side of the membrane. One can recognise a Sema domain in the interval 24 to 512 (SEPISISHGN…FSTCVIKVPL (489 aa)). N-linked (GlcNAc...) asparagine glycans are attached at residues Asn-33, Asn-49, and Asn-65. Cystine bridges form between Cys-107–Cys-117, Cys-135–Cys-144, Cys-258–Cys-369, and Cys-283–Cys-328. A glycan (N-linked (GlcNAc...) asparagine) is linked at Asn-282. 2 N-linked (GlcNAc...) asparagine glycosylation sites follow: Asn-434 and Asn-461. 4 cysteine pairs are disulfide-bonded: Cys-477–Cys-506, Cys-515–Cys-533, Cys-521–Cys-568, and Cys-525–Cys-542. Residues 650–670 (LLAIAVILAFVMGAVFSGITV) traverse the membrane as a helical segment. Over 671–1030 (YCVCDHRRKD…TSMKPNDACT (360 aa)) the chain is Cytoplasmic. Ser-698 bears the Phosphoserine mark. 3 disordered regions span residues 754-778 (ALPTPESTPTLQQKRKPSRGSREWE), 860-897 (SSKSPNHGVNLVENLDSLPPKVPQREASLGPPGASLSQ), and 912-1030 (YGVD…DACT). Residues 920 to 936 (YPTNSLTRSHQATTLKR) show a composition bias toward polar residues. A compositionally biased stretch (low complexity) spans 937–952 (NNTNSSNSSHLSRNQS). Ser-952 carries the phosphoserine modification. Polar residues-rich tracts occupy residues 970–997 (QVHSSQPSGQAVTVSRQPSLNAYNSLTR) and 1018–1030 (PLSTSMKPNDACT).

It belongs to the semaphorin family. In terms of assembly, active as a homodimer or oligomer. The SEMA6A homodimer interacts with a PLXNA2 homodimer, giving rise to a heterotetramer. Interacts with EVL. As to quaternary structure, (Microbial infection) Interacts with P.sordellii toxin TcsL; semaphorins SEMA6A and SEMA6B constitute the major host receptors for TcsL in the vascular endothelium.

It is found in the cell membrane. Its function is as follows. Cell surface receptor for PLXNA2 that plays an important role in cell-cell signaling. Required for normal granule cell migration in the developing cerebellum. Promotes reorganization of the actin cytoskeleton and plays an important role in axon guidance in the developing central nervous system. Can act as repulsive axon guidance cue. Has repulsive action towards migrating granular neurons. May play a role in channeling sympathetic axons into the sympathetic chains and controlling the temporal sequence of sympathetic target innervation. (Microbial infection) Acts as a receptor for P.sordellii toxin TcsL in the in the vascular endothelium. This chain is Semaphorin-6A (SEMA6A), found in Homo sapiens (Human).